Here is a 308-residue protein sequence, read N- to C-terminus: uncharacterized protein (308 aa).

The signal sequence occupies residues 1–19 (MKLLLILILIINNYNLCLS). N25 and N300 each carry an N-linked (GlcNAc...) asparagine glycan.

It is found in the secreted. This is an uncharacterized protein from Dictyostelium discoideum (Social amoeba).